The primary structure comprises 279 residues: Serine protease 29 (279 aa).

A signal peptide spans 1-17; the sequence is MLIQLCLTLFFLGCSIA. The region spanning 31 to 276 is the Peptidase S1 domain; the sequence is IVGGHSAPQG…FLPWITQQMQ (246 aa). Cysteine 62 and cysteine 78 are oxidised to a cystine. Residues histidine 77 and aspartate 124 each act as charge relay system in the active site. Intrachain disulfides connect cysteine 158–cysteine 234, cysteine 191–cysteine 215, and cysteine 224–cysteine 252. A glycan (N-linked (GlcNAc...) asparagine) is linked at asparagine 197. Residue serine 228 is the Charge relay system of the active site. N-linked (GlcNAc...) asparagine glycosylation occurs at asparagine 235.

This sequence belongs to the peptidase S1 family. Homooligomer, heterodimer and heterotetramer. Able to form homo- and hetero- tetrameric structures. Heterotetramer is far more stable than the homotetramer. As to expression, expressed in embryos and placenta. Found in uterus especially in glandular epithelium during zona lysis and implantation.

The protein resides in the secreted. In terms of biological role, involved in embryo hatching and implantation. This Mus musculus (Mouse) protein is Serine protease 29 (Prss29).